Consider the following 400-residue polypeptide: Nicotinate phosphoribosyltransferase (400 aa).

Residue H220 is modified to Phosphohistidine; by autocatalysis.

This sequence belongs to the NAPRTase family. Post-translationally, transiently phosphorylated on a His residue during the reaction cycle. Phosphorylation strongly increases the affinity for substrates and increases the rate of nicotinate D-ribonucleotide production. Dephosphorylation regenerates the low-affinity form of the enzyme, leading to product release.

It carries out the reaction nicotinate + 5-phospho-alpha-D-ribose 1-diphosphate + ATP + H2O = nicotinate beta-D-ribonucleotide + ADP + phosphate + diphosphate. The protein operates within cofactor biosynthesis; NAD(+) biosynthesis; nicotinate D-ribonucleotide from nicotinate: step 1/1. Functionally, catalyzes the synthesis of beta-nicotinate D-ribonucleotide from nicotinate and 5-phospho-D-ribose 1-phosphate at the expense of ATP. This is Nicotinate phosphoribosyltransferase from Escherichia coli O45:K1 (strain S88 / ExPEC).